A 356-amino-acid polypeptide reads, in one-letter code: Iron-regulated protein A (356 aa).

The N-terminal stretch at 1–44 (MIVTGSQVRQGLNTWFVLPLRRTAIGLGCAGVATLFSACGQTQA) is a signal peptide. Hydrophilic stretches follow at residues 75–145 (QALQ…EQRE) and 240–310 (GGPL…ATAR).

The iron-regulated protein A is one unit of the protein complex CPVI-4, which is synthesized under iron deficient conditions.

The protein localises to the cell inner membrane. Its function is as follows. IrpA occurs under iron-deficient growth conditions in cyanobacterium Synechococcus and disappears in cells recovering from iron starvation. It seems to be involved in iron acquisition, uptake or storage. This is Iron-regulated protein A (irpA) from Synechococcus elongatus (strain ATCC 33912 / PCC 7942 / FACHB-805) (Anacystis nidulans R2).